We begin with the raw amino-acid sequence, 630 residues long: ATP-dependent zinc metalloprotease FtsH 2 (630 aa).

Topologically, residues 1 to 8 are cytoplasmic; sequence MNNNPNRR. Residues 9–29 form a helical membrane-spanning segment; it reads GSLIGPLFIYFILAMLIFMSI. Over 30-110 the chain is Periplasmic; it reads SQLNTSNITE…YIQNTGASWW (81 aa). Residues 111–131 form a helical membrane-spanning segment; the sequence is VTMLIYMLPLIILMFFWFWMF. Topologically, residues 132–630 are cytoplasmic; sequence RRSGTGEGIP…KETNLFVSYA (499 aa). 203-210 is a binding site for ATP; that stretch reads GPPGTGKT. Residue His-425 participates in Zn(2+) binding. Glu-426 is an active-site residue. Zn(2+) is bound by residues His-429 and Asp-502.

In the central section; belongs to the AAA ATPase family. It in the C-terminal section; belongs to the peptidase M41 family. As to quaternary structure, homohexamer. Zn(2+) is required as a cofactor.

The protein resides in the cell inner membrane. Functionally, acts as a processive, ATP-dependent zinc metallopeptidase for both cytoplasmic and membrane proteins. Plays a role in the quality control of integral membrane proteins. In Petrotoga mobilis (strain DSM 10674 / SJ95), this protein is ATP-dependent zinc metalloprotease FtsH 2.